Here is a 72-residue protein sequence, read N- to C-terminus: Conotoxin VnMKLT2-021 (72 aa).

The N-terminal stretch at 1–22 (MKLTCVLIVAVLFLTACQLTTA) is a signal peptide. Residues 23–45 (ASYARSEREHPDLGSSDQNSKLT) constitute a propeptide that is removed on maturation. Residues 25–44 (YARSEREHPDLGSSDQNSKL) are disordered. Disulfide bonds link Cys48/Cys62, Cys55/Cys66, and Cys61/Cys71.

It belongs to the conotoxin O1 superfamily. As to expression, expressed by the venom duct.

Its subcellular location is the secreted. This chain is Conotoxin VnMKLT2-021, found in Conus ventricosus (Mediterranean cone).